Consider the following 183-residue polypeptide: Ribulose bisphosphate carboxylase small subunit, chloroplastic 5 (183 aa).

The N-terminal 42 residues, 1–42, are a transit peptide targeting the chloroplast; that stretch reads MAAAMMNKSVLLNKQCGKPAAVPKVVMSKGGFARTSAVNKNR.

This sequence belongs to the RuBisCO small chain family. In terms of assembly, heterohexadecamer of 8 large and 8 small subunits.

The protein localises to the plastid. It is found in the chloroplast. RuBisCO catalyzes two reactions: the carboxylation of D-ribulose 1,5-bisphosphate, the primary event in carbon dioxide fixation, as well as the oxidative fragmentation of the pentose substrate. Both reactions occur simultaneously and in competition at the same active site. Although the small subunit is not catalytic it is essential for maximal activity. This Acetabularia acetabulum (Mermaid's wine glass) protein is Ribulose bisphosphate carboxylase small subunit, chloroplastic 5.